Reading from the N-terminus, the 534-residue chain is CTP synthase (534 aa).

Residues 1-267 (MTKYIFVTGG…DQIVCDHLKL (267 aa)) are amidoligase domain. Ser-13 lines the CTP pocket. Ser-13 contributes to the UTP binding site. 14–19 (SIGKGI) serves as a coordination point for ATP. Tyr-54 contacts L-glutamine. Position 71 (Asp-71) interacts with ATP. Mg(2+)-binding residues include Asp-71 and Glu-141. Residues 148 to 150 (DIE), 188 to 193 (KTKPTQ), and Lys-224 each bind CTP. Residues 188–193 (KTKPTQ) and Lys-224 each bind UTP. ATP is bound at residue 240 to 242 (RDV). Positions 292–534 (KIALVGKYVE…FVTAAIKNSN (243 aa)) constitute a Glutamine amidotransferase type-1 domain. L-glutamine is bound at residue Gly-354. The Nucleophile; for glutamine hydrolysis role is filled by Cys-381. L-glutamine is bound by residues 382–385 (LGMQ), Glu-405, and Arg-463. Active-site residues include His-508 and Glu-510.

Belongs to the CTP synthase family. Homotetramer.

It catalyses the reaction UTP + L-glutamine + ATP + H2O = CTP + L-glutamate + ADP + phosphate + 2 H(+). The catalysed reaction is L-glutamine + H2O = L-glutamate + NH4(+). The enzyme catalyses UTP + NH4(+) + ATP = CTP + ADP + phosphate + 2 H(+). It participates in pyrimidine metabolism; CTP biosynthesis via de novo pathway; CTP from UDP: step 2/2. With respect to regulation, allosterically activated by GTP, when glutamine is the substrate; GTP has no effect on the reaction when ammonia is the substrate. The allosteric effector GTP functions by stabilizing the protein conformation that binds the tetrahedral intermediate(s) formed during glutamine hydrolysis. Inhibited by the product CTP, via allosteric rather than competitive inhibition. In terms of biological role, catalyzes the ATP-dependent amination of UTP to CTP with either L-glutamine or ammonia as the source of nitrogen. Regulates intracellular CTP levels through interactions with the four ribonucleotide triphosphates. The protein is CTP synthase of Streptococcus pyogenes serotype M2 (strain MGAS10270).